Here is a 433-residue protein sequence, read N- to C-terminus: Tyrosine--tRNA ligase (433 aa).

Residue Tyr34 coordinates L-tyrosine. Positions 39-48 match the 'HIGH' region motif; sequence PTASSLHVGS. Positions 169 and 173 each coordinate L-tyrosine. Residues 229–233 carry the 'KMSKS' region motif; that stretch reads KMGKT. ATP is bound at residue Lys232. In terms of domain architecture, S4 RNA-binding spans 364–432; that stretch reads IPAFVLFHTV…RYHTIVVRKG (69 aa).

Belongs to the class-I aminoacyl-tRNA synthetase family. TyrS type 1 subfamily. In terms of assembly, homodimer.

It is found in the cytoplasm. The catalysed reaction is tRNA(Tyr) + L-tyrosine + ATP = L-tyrosyl-tRNA(Tyr) + AMP + diphosphate + H(+). Its function is as follows. Catalyzes the attachment of tyrosine to tRNA(Tyr) in a two-step reaction: tyrosine is first activated by ATP to form Tyr-AMP and then transferred to the acceptor end of tRNA(Tyr). This is Tyrosine--tRNA ligase from Desulfosudis oleivorans (strain DSM 6200 / JCM 39069 / Hxd3) (Desulfococcus oleovorans).